Consider the following 356-residue polypeptide: Dihydroorotate dehydrogenase (quinone) (356 aa).

Residues 67–71 and Thr91 each bind FMN; that span reads PGFDK. Lys71 is a binding site for substrate. 116–120 serves as a coordination point for substrate; sequence NRMGF. Residues Asn147 and Asn178 each contribute to the FMN site. Asn178 contributes to the substrate binding site. Ser181 (nucleophile) is an active-site residue. Asn183 provides a ligand contact to substrate. Lys218 and Ser246 together coordinate FMN. 247–248 contacts substrate; sequence NT. FMN contacts are provided by residues Gly268, Gly297, and 318-319; that span reads YS.

This sequence belongs to the dihydroorotate dehydrogenase family. Type 2 subfamily. In terms of assembly, monomer. It depends on FMN as a cofactor.

It is found in the cell membrane. It catalyses the reaction (S)-dihydroorotate + a quinone = orotate + a quinol. It functions in the pathway pyrimidine metabolism; UMP biosynthesis via de novo pathway; orotate from (S)-dihydroorotate (quinone route): step 1/1. In terms of biological role, catalyzes the conversion of dihydroorotate to orotate with quinone as electron acceptor. This chain is Dihydroorotate dehydrogenase (quinone), found in Sphingopyxis alaskensis (strain DSM 13593 / LMG 18877 / RB2256) (Sphingomonas alaskensis).